Reading from the N-terminus, the 332-residue chain is Protoheme IX farnesyltransferase (332 aa).

7 consecutive transmembrane segments (helical) span residues 63 to 83 (LICTLGGGALAAAAAGALNCL), 109 to 129 (TVFLGAVSCTLAAAMLLISGV), 132 to 152 (LAAGLTLLGLCSYVILYTIIL), 160 to 180 (IVFGGVAGAIPPLVGASAATG), 188 to 208 (WLFSLVMLWTPAHFWALAILL), 245 to 265 (ILGVFALPEGGILYLIMLLPF), and 286 to 306 (AKGLFRWSILYMFGICLLLLI).

The protein belongs to the UbiA prenyltransferase family. Protoheme IX farnesyltransferase subfamily.

The protein localises to the cell inner membrane. The catalysed reaction is heme b + (2E,6E)-farnesyl diphosphate + H2O = Fe(II)-heme o + diphosphate. It functions in the pathway porphyrin-containing compound metabolism; heme O biosynthesis; heme O from protoheme: step 1/1. Its function is as follows. Converts heme B (protoheme IX) to heme O by substitution of the vinyl group on carbon 2 of heme B porphyrin ring with a hydroxyethyl farnesyl side group. This chain is Protoheme IX farnesyltransferase, found in Prochlorococcus marinus subsp. pastoris (strain CCMP1986 / NIES-2087 / MED4).